A 390-amino-acid polypeptide reads, in one-letter code: Phosphoglycerate kinase (390 aa).

Substrate-binding positions include 19–21 (DYN), Arg34, 57–60 (HLGR), Arg115, and Arg148. ATP-binding positions include Lys198, Gly289, Glu320, and 347 to 350 (GGDS).

Belongs to the phosphoglycerate kinase family. Monomer.

The protein resides in the cytoplasm. It catalyses the reaction (2R)-3-phosphoglycerate + ATP = (2R)-3-phospho-glyceroyl phosphate + ADP. It participates in carbohydrate degradation; glycolysis; pyruvate from D-glyceraldehyde 3-phosphate: step 2/5. The chain is Phosphoglycerate kinase from Thermus thermophilus (strain ATCC BAA-163 / DSM 7039 / HB27).